The chain runs to 190 residues: Elongation factor P (190 aa).

The protein belongs to the elongation factor P family.

Its subcellular location is the cytoplasm. Its pathway is protein biosynthesis; polypeptide chain elongation. Involved in peptide bond synthesis. Stimulates efficient translation and peptide-bond synthesis on native or reconstituted 70S ribosomes in vitro. Probably functions indirectly by altering the affinity of the ribosome for aminoacyl-tRNA, thus increasing their reactivity as acceptors for peptidyl transferase. This Pseudomonas fluorescens (strain SBW25) protein is Elongation factor P.